A 223-amino-acid chain; its full sequence is Receptor-transporting protein 2 (223 aa).

Over 1–193 the chain is Cytoplasmic; it reads MSTSLTTCEW…KKGQAGFISS (193 aa). The 3CxxC-type zinc finger occupies 52 to 161; the sequence is ASGRFHCSWC…SEFCEACQEG (110 aa). A helical transmembrane segment spans residues 194 to 216; sequence FFSFRWCLFWGTLCLVIVYLQFF. The Extracellular segment spans residues 217–223; that stretch reads RGRSGFL.

Belongs to the TMEM7 family. As to quaternary structure, interacts with olfactory receptors. In terms of tissue distribution, predominantly expressed in olfactory and vomeronasal organs, in mature olfactory sensory neurons.

The protein resides in the cell membrane. Its function is as follows. Specifically promotes functional cell surface expression of olfactory receptors, but not of other GPCRs. The protein is Receptor-transporting protein 2 (Rtp2) of Mus musculus (Mouse).